Reading from the N-terminus, the 274-residue chain is ATP synthase subunit a (274 aa).

The next 5 helical transmembrane spans lie at 44 to 64 (VDSM…FYMV), 110 to 130 (FIWV…FPFI), 142 to 164 (IVPS…LILF), 212 to 232 (LFGN…LLPW), and 243 to 263 (AIFH…LTIV).

This sequence belongs to the ATPase A chain family. As to quaternary structure, F-type ATPases have 2 components, CF(1) - the catalytic core - and CF(0) - the membrane proton channel. CF(1) has five subunits: alpha(3), beta(3), gamma(1), delta(1), epsilon(1). CF(0) has three main subunits: a(1), b(2) and c(9-12). The alpha and beta chains form an alternating ring which encloses part of the gamma chain. CF(1) is attached to CF(0) by a central stalk formed by the gamma and epsilon chains, while a peripheral stalk is formed by the delta and b chains.

The protein resides in the cell membrane. Its function is as follows. Key component of the proton channel; it plays a direct role in the translocation of protons across the membrane. The sequence is that of ATP synthase subunit a from Buchnera aphidicola subsp. Acyrthosiphon pisum (strain APS) (Acyrthosiphon pisum symbiotic bacterium).